Reading from the N-terminus, the 161-residue chain is Phosphopantetheine adenylyltransferase (161 aa).

Serine 9 is a binding site for substrate. ATP-binding positions include 9 to 10 (SF) and histidine 17. Substrate contacts are provided by lysine 41, valine 73, and lysine 87. ATP-binding positions include 88 to 90 (GLR), glutamate 98, and 122 to 128 (YSFVSSS).

This sequence belongs to the bacterial CoaD family. In terms of assembly, homohexamer. Mg(2+) is required as a cofactor.

The protein resides in the cytoplasm. It carries out the reaction (R)-4'-phosphopantetheine + ATP + H(+) = 3'-dephospho-CoA + diphosphate. It participates in cofactor biosynthesis; coenzyme A biosynthesis; CoA from (R)-pantothenate: step 4/5. Functionally, reversibly transfers an adenylyl group from ATP to 4'-phosphopantetheine, yielding dephospho-CoA (dPCoA) and pyrophosphate. This chain is Phosphopantetheine adenylyltransferase, found in Mycobacterium bovis (strain ATCC BAA-935 / AF2122/97).